We begin with the raw amino-acid sequence, 463 residues long: Elongation factor 1-alpha (463 aa).

The 238-residue stretch at 5–242 (KVHINIVVIG…DSIIPPQRPT (238 aa)) folds into the tr-type G domain. The G1 stretch occupies residues 14–21 (GHVDSGKS). 14–21 (GHVDSGKS) contacts GTP. Positions 70 to 74 (GITID) are G2. The segment at 91-94 (DAPG) is G3. Residues 91-95 (DAPGH) and 153-156 (NKMD) each bind GTP. The interval 153 to 156 (NKMD) is G4. The tract at residues 194–196 (SGF) is G5. Residues E301 and E374 each carry the 5-glutamyl glycerylphosphorylethanolamine modification. The tract at residues 443–463 (KSDGSSGKVTKSAQKAAPKKK) is disordered. The segment covering 446 to 455 (GSSGKVTKSA) has biased composition (polar residues).

The protein belongs to the TRAFAC class translation factor GTPase superfamily. Classic translation factor GTPase family. EF-Tu/EF-1A subfamily.

Its subcellular location is the cytoplasm. In terms of biological role, this protein promotes the GTP-dependent binding of aminoacyl-tRNA to the A-site of ribosomes during protein biosynthesis. The protein is Elongation factor 1-alpha of Caenorhabditis elegans.